A 269-amino-acid chain; its full sequence is Aquaporin-1 (269 aa).

Residues M1 to W11 lie on the Cytoplasmic side of the membrane. A helical transmembrane segment spans residues R12–I29. The Extracellular segment spans residues G30 to V46. A helical transmembrane segment spans residues Q47–Q65. Topologically, residues S66 to G68 are cytoplasmic. An intramembrane segment occupies H69–G82. Positions N76 to A78 match the NPA 1 motif. Residues L83–S90 lie on the Cytoplasmic side of the membrane. Residues I91–T109 traverse the membrane as a helical segment. Residues A110–V133 lie on the Extracellular side of the membrane. The chain crosses the membrane as a helical span at residues N134–V153. Topologically, residues L154–D163 are cytoplasmic. The helical transmembrane segment at L164–L181 threads the bilayer. At L182 to Y186 the chain is on the extracellular side. An intramembrane segment occupies T187 to S199. An NPA 2 motif is present at residues N192 to A194. At A200–F206 the chain is on the extracellular side. The N-linked (GlcNAc...) asparagine glycan is linked to N205. The chain crosses the membrane as a helical span at residues S207–V224. Over L225–K269 the chain is Cytoplasmic. The residue at position 247 (S247) is a Phosphoserine. Y253 carries the post-translational modification Phosphotyrosine. A Phosphoserine modification is found at S262.

This sequence belongs to the MIP/aquaporin (TC 1.A.8) family. In terms of assembly, homotetramer; each monomer provides an independent water pore. Component of the ankyrin-1 complex in the erythrocyte, composed of ANK1, RHCE, RHAG, SLC4A1, EPB42, GYPA, GYPB and AQP1. Interacts with EPHB2; involved in endolymph production in the inner ear. Identified in a complex with STOM. Interacts (via the N-terminal) with ANK1 (via ANK 1-5 repeats). Interacts (via the C-terminal) with EPB42. As to expression, detected in erythrocytes (at protein level). In the kidney, expressed on luminal and basal borders of proximal tubules and in the thin limb of Henle's loop (at protein level).

Its subcellular location is the cell membrane. It catalyses the reaction H2O(in) = H2O(out). The enzyme catalyses nitric oxide(out) = nitric oxide(in). The catalysed reaction is CO2(out) = CO2(in). It carries out the reaction glycerol(in) = glycerol(out). It catalyses the reaction H2O2(out) = H2O2(in). The enzyme catalyses K(+)(in) = K(+)(out). The catalysed reaction is Na(+)(in) = Na(+)(out). Its function is as follows. Forms a water channel that facilitates the transport of water across cell membranes, playing a crucial role in water homeostasis in various tissues. Could also be permeable to small solutes including hydrogen peroxide, glycerol and gases such as amonnia (NH3), nitric oxide (NO) and carbon dioxide (CO2). Recruited to the ankyrin-1 complex, a multiprotein complex of the erythrocyte membrane, it could be part of a CO2 metabolon, linking facilitated diffusion of CO2 across the membrane, anion exchange of Cl(-)/HCO3(-) and interconversion of dissolved CO2 and carbonic acid in the cytosol. In vitro, it shows non-selective gated cation channel activity and may be permeable to cations like K(+) and Na(+) in vivo. The sequence is that of Aquaporin-1 from Mus musculus (Mouse).